A 700-amino-acid chain; its full sequence is Elongation factor G (700 aa).

A tr-type G domain is found at 8-290 (ERYRNIGISA…AVIDYLPSPV (283 aa)). GTP contacts are provided by residues 17 to 24 (AHIDAGKT), 88 to 92 (DTPGH), and 142 to 145 (NKMD).

The protein belongs to the TRAFAC class translation factor GTPase superfamily. Classic translation factor GTPase family. EF-G/EF-2 subfamily.

The protein localises to the cytoplasm. Catalyzes the GTP-dependent ribosomal translocation step during translation elongation. During this step, the ribosome changes from the pre-translocational (PRE) to the post-translocational (POST) state as the newly formed A-site-bound peptidyl-tRNA and P-site-bound deacylated tRNA move to the P and E sites, respectively. Catalyzes the coordinated movement of the two tRNA molecules, the mRNA and conformational changes in the ribosome. The polypeptide is Elongation factor G (Paracidovorax citrulli (strain AAC00-1) (Acidovorax citrulli)).